The following is a 1404-amino-acid chain: Clustered mitochondria protein homolog (1404 aa).

The Clu domain occupies 357–646 (HTHHADALRS…RLNPVDINWL (290 aa)). The span at 528–540 (ADELPEADGETTE) shows a compositional bias: acidic residues. 4 disordered regions span residues 528–561 (ADELPEADGETTELAEAAPEKKSPEAKLAQSNKA), 706–735 (DAKAKEAASKEDGEKTEAPEVEAEEPERLD), 996–1046 (GCHG…ARAT), and 1337–1372 (SERQARLPASRRGNSNAGGGAAAITGAGTTASGNGT). Residues 706–723 (DAKAKEAASKEDGEKTEA) show a composition bias toward basic and acidic residues. 2 stretches are compositionally biased toward low complexity: residues 1021 to 1046 (NEQQNGVKKSNVGAAAAKPTKAARAT) and 1358 to 1372 (AAITGAGTTASGNGT).

This sequence belongs to the CLU family. May associate with the eukaryotic translation initiation factor 3 (eIF-3) complex.

It is found in the cytoplasm. MRNA-binding protein involved in proper cytoplasmic distribution of mitochondria. This Mycosarcoma maydis (Corn smut fungus) protein is Clustered mitochondria protein homolog.